Consider the following 347-residue polypeptide: NADH-ubiquinone oxidoreductase chain 2 (347 aa).

Transmembrane regions (helical) follow at residues 13 to 33 (IFAG…WVGL), 56 to 76 (AIKY…AILF), 96 to 116 (LMIM…FWVP), 123 to 143 (PLTS…SIMY), 149 to 169 (LNVS…SWGG), 178 to 198 (ILAY…PYNP), 201 to 221 (TILN…LLNL), 247 to 267 (TLLS…WAII), 274 to 294 (NSLI…YFYL), and 326 to 346 (LPTL…MLMI).

Belongs to the complex I subunit 2 family. In terms of assembly, core subunit of respiratory chain NADH dehydrogenase (Complex I) which is composed of 45 different subunits. Interacts with TMEM242.

Its subcellular location is the mitochondrion inner membrane. The catalysed reaction is a ubiquinone + NADH + 5 H(+)(in) = a ubiquinol + NAD(+) + 4 H(+)(out). Functionally, core subunit of the mitochondrial membrane respiratory chain NADH dehydrogenase (Complex I) which catalyzes electron transfer from NADH through the respiratory chain, using ubiquinone as an electron acceptor. Essential for the catalytic activity and assembly of complex I. The polypeptide is NADH-ubiquinone oxidoreductase chain 2 (Homo sapiens (Human)).